The following is a 1669-amino-acid chain: Dystrophin, isoform B (1669 aa).

Residues 1–11 show a composition bias toward pro residues; that stretch reads MTAKPPPPIPP. Disordered stretches follow at residues 1–28, 43–243, 327–356, 389–417, and 481–508; these read MTAK…LAPE, RGQQ…SEDA, RAQA…RSTI, GGGG…MPLS, and SGAL…NSSG. Polar residues predominate over residues 53–62; that stretch reads SQEQHATNTL. Positions 118 to 131 are enriched in pro residues; the sequence is GLPPTMRQPPPLPR. The span at 132–147 shows a compositional bias: low complexity; it reads KPASTQSSAQNSAQSS. Basic and acidic residues predominate over residues 153–166; sequence KFKDKPPPPPEKHS. 2 stretches are compositionally biased toward low complexity: residues 328–347 and 396–405; these read AQAQ…SNSQ and STGNAVANSG. Residues 485–500 are compositionally biased toward basic and acidic residues; the sequence is SREELRMRRRSSHDET. 4 Spectrin repeats span residues 541 to 643, 650 to 747, 754 to 883, and 890 to 990; these read QRFE…KQLH, QSFD…NRLE, NALL…HRLD, and RQFQ…KVLC. The tract at residues 827 to 851 is disordered; that stretch reads VSDTSDTEANHDSDSRYMSAEEQSR. The disordered stretch occupies residues 994–1024; that stretch reads AQQTHENGDDGRTTSNSGTIGPLPNLGQSVK. Residues 1021–1054 form the WW domain; the sequence is QSVKPPWERATTAANVPYYIDHERETTHWDHPEM. The segment at 1279–1335 adopts a ZZ-type zinc-finger fold; the sequence is KHQAKCNICKEYPIVGFRYRCLKCFNFDMCQKCFFFGRNAKNHKLTHPMHEYCTTTT. Cys-1284, Cys-1287, Cys-1299, Cys-1302, Cys-1308, Cys-1311, His-1321, and His-1325 together coordinate Zn(2+). At Ser-1379 the chain carries Phosphoserine. Disordered stretches follow at residues 1488-1516 and 1559-1669; these read EQSG…GEQG and DEPN…ELQK. Polar residues-rich tracts occupy residues 1497-1509 and 1580-1611; these read NGMQ…MTGL and ALNS…QQNG. The span at 1630-1641 shows a compositional bias: acidic residues; that stretch reads QELESINDDLED. Residues 1642–1660 are compositionally biased toward low complexity; it reads SSSSNTTNTTTTTTTTATT.

As to quaternary structure, component of the dystrophin associated protein complex (DAPC). Interacts with Dg, via the Dg WW domain binding sites. Expressed in neuronally derived tissues, mainly the CNS and the brain of stage 16 embryos. Lower level expression is seen in the sensory organs. Expression is absent from the musculature. In larvae, expression is predominant throughout the neuropil and brain and in the eye antennal disks.

It is found in the cell membrane. It localises to the sarcolemma. The protein resides in the cytoplasm. The protein localises to the cytoskeleton. In terms of biological role, required for the maintenance of appropriate synaptic retrograde communication and the stabilization of muscle cell architecture or physiology. May play a role in anchoring the cytoskeleton to the plasma membrane. The polypeptide is Dystrophin, isoform B (Dys) (Drosophila melanogaster (Fruit fly)).